The chain runs to 813 residues: Cadherin-22 (813 aa).

The first 33 residues, 1 to 33 (MRPRPEGALRAGAALSPVLLFLLLLPLLGHLWA), serve as a signal peptide directing secretion. The Extracellular portion of the chain corresponds to 34–621 (ASTPAPSSLS…AFVMAASLSP (588 aa)). Cadherin domains lie at 61 to 165 (WVWN…EPRF), 166 to 274 (LHGP…PPRF), 275 to 391 (PQKM…PPEF), 392 to 495 (RPPS…NPPE), and 496 to 613 (LATP…TTAF). N-linked (GlcNAc...) asparagine glycosylation occurs at Asn-159. N-linked (GlcNAc...) asparagine glycosylation is found at Asn-463 and Asn-609. Residues 622 to 642 (GALIALLVCVLILVVLALLIL) form a helical membrane-spanning segment. Residues 643–813 (TLRRHHKSHL…HRGDDEAPAS (171 aa)) lie on the Cytoplasmic side of the membrane. Residues 696 to 726 (GGDPGGGAASPPQAASSSERHSLPRGPSSPE) are disordered.

In terms of tissue distribution, predominantly expressed in brain. Abundant in olfactory bulb, cerebrum, and cerebellum, less in pons, medulla, and spinal cord. Low expression in heart. No expression in lung, liver, spleen, kidney, testis, stomach, intestine, colon, and placenta.

It is found in the cell membrane. In terms of biological role, cadherins are calcium-dependent cell adhesion proteins. They preferentially interact with themselves in a homophilic manner in connecting cells; cadherins may thus contribute to the sorting of heterogeneous cell types. PB-cadherins may have a role in the morphological organization of pituitary gland and brain tissues. The protein is Cadherin-22 (Cdh22) of Mus musculus (Mouse).